Reading from the N-terminus, the 157-residue chain is Tripartite terminase subunit 2 (157 aa).

Residues 1–69 (MSWAKQRVPF…DGEDGHALPD (69 aa)) form a disordered region. A compositionally biased stretch (acidic residues) spans 11–27 (LDDDDGEEENDVQDDVD).

Belongs to the herpesviridae TRM2 protein family. In terms of assembly, associates with TRM1 and TRM3 to form the tripartite terminase complex.

The protein localises to the host nucleus. Functionally, component of the molecular motor that translocates viral genomic DNA in empty capsid during DNA packaging. Forms a tripartite terminase complex together with TRM1 and TRM3 in the host cytoplasm. Once the complex reaches the host nucleus, it interacts with the capsid portal vertex. This portal forms a ring in which genomic DNA is translocated into the capsid. The polypeptide is Tripartite terminase subunit 2 (Homo sapiens (Human)).